A 455-amino-acid chain; its full sequence is Serine--tRNA ligase (455 aa).

252-254 is an L-serine binding site; sequence TAE. Residues 283–285 and V299 contribute to the ATP site; that span reads RKE. An L-serine-binding site is contributed by E306. Residue 370-373 participates in ATP binding; sequence EVVS. An L-serine-binding site is contributed by T406.

It belongs to the class-II aminoacyl-tRNA synthetase family. Type-1 seryl-tRNA synthetase subfamily. As to quaternary structure, homodimer. The tRNA molecule binds across the dimer.

The protein localises to the cytoplasm. The catalysed reaction is tRNA(Ser) + L-serine + ATP = L-seryl-tRNA(Ser) + AMP + diphosphate + H(+). The enzyme catalyses tRNA(Sec) + L-serine + ATP = L-seryl-tRNA(Sec) + AMP + diphosphate + H(+). It participates in aminoacyl-tRNA biosynthesis; selenocysteinyl-tRNA(Sec) biosynthesis; L-seryl-tRNA(Sec) from L-serine and tRNA(Sec): step 1/1. In terms of biological role, catalyzes the attachment of serine to tRNA(Ser). Is also able to aminoacylate tRNA(Sec) with serine, to form the misacylated tRNA L-seryl-tRNA(Sec), which will be further converted into selenocysteinyl-tRNA(Sec). This Pyrococcus furiosus (strain ATCC 43587 / DSM 3638 / JCM 8422 / Vc1) protein is Serine--tRNA ligase.